The sequence spans 433 residues: Enolase (433 aa).

A (2R)-2-phosphoglycerate-binding site is contributed by Gln164. The Proton donor role is filled by Glu206. The Mg(2+) site is built by Asp243, Glu289, and Asp316. (2R)-2-phosphoglycerate-binding residues include Lys341, Arg370, Ser371, and Lys392. Lys341 functions as the Proton acceptor in the catalytic mechanism.

Belongs to the enolase family. The cofactor is Mg(2+).

The protein resides in the cytoplasm. Its subcellular location is the secreted. The protein localises to the cell surface. It catalyses the reaction (2R)-2-phosphoglycerate = phosphoenolpyruvate + H2O. The protein operates within carbohydrate degradation; glycolysis; pyruvate from D-glyceraldehyde 3-phosphate: step 4/5. Catalyzes the reversible conversion of 2-phosphoglycerate (2-PG) into phosphoenolpyruvate (PEP). It is essential for the degradation of carbohydrates via glycolysis. The protein is Enolase of Borreliella burgdorferi (strain ATCC 35210 / DSM 4680 / CIP 102532 / B31) (Borrelia burgdorferi).